Here is a 126-residue protein sequence, read N- to C-terminus: Protein ApaG (126 aa).

An ApaG domain is found at 2–126 (RRKPYELKVE…FSLAIPRRLH (125 aa)).

The polypeptide is Protein ApaG (Methylococcus capsulatus (strain ATCC 33009 / NCIMB 11132 / Bath)).